The sequence spans 1520 residues: Accessory colonization factor AcfD (1520 aa).

The N-terminal stretch at 1–16 (MKIRIVSLIVLGFLIG) is a signal peptide. C17 carries N-palmitoyl cysteine lipidation. C17 carries S-diacylglycerol cysteine lipidation. Residues 1085-1388 (GNRQPTGQWA…MFAQLKEWAE (304 aa)) form the Peptidase M60 domain.

It localises to the cell membrane. This Vibrio cholerae serotype O1 (strain ATCC 39315 / El Tor Inaba N16961) protein is Accessory colonization factor AcfD (acfD).